A 196-amino-acid polypeptide reads, in one-letter code: dTTP/UTP pyrophosphatase (196 aa).

Catalysis depends on Asp-73, which acts as the Proton acceptor.

This sequence belongs to the Maf family. YhdE subfamily. The cofactor is a divalent metal cation.

It is found in the cytoplasm. The catalysed reaction is dTTP + H2O = dTMP + diphosphate + H(+). It carries out the reaction UTP + H2O = UMP + diphosphate + H(+). Its function is as follows. Nucleoside triphosphate pyrophosphatase that hydrolyzes dTTP and UTP. May have a dual role in cell division arrest and in preventing the incorporation of modified nucleotides into cellular nucleic acids. This is dTTP/UTP pyrophosphatase from Myxococcus xanthus (strain DK1622).